Reading from the N-terminus, the 215-residue chain is MGKVYDWFEERLEVQAIADDISSKYVPPHVNIFYCFGGIVFTCFLVQVATGFAMTFYYRPSVVDAFASVEYIMTSVNFGWLIRSIHRWSASMMVMMLVLHVFRVYLTGGFKKPRELTWVTGVILAVVTVSFGVTGYSLPWDQVGFWACKIVTGVPAAVPIVGPPLVLVLRGGESVGQSTLTRFYSAHTFVLPLAAAVLMLTHFLMIRKQGISGPL.

A helical membrane pass occupies residues Ile32–Phe52. Cys35 provides a ligand contact to heme c. Heme b-binding residues include His86 and His100. 3 consecutive transmembrane segments (helical) span residues Ala90–Phe110, Leu116–Tyr136, and Ala186–Ile206. 2 residues coordinate heme b: His187 and His202.

Belongs to the cytochrome b family. PetB subfamily. The 4 large subunits of the cytochrome b6-f complex are cytochrome b6, subunit IV (17 kDa polypeptide, PetD), cytochrome f and the Rieske protein, while the 4 small subunits are PetG, PetL, PetM and PetN. The complex functions as a dimer. It depends on heme b as a cofactor. Requires heme c as cofactor.

It localises to the plastid. It is found in the chloroplast thylakoid membrane. Component of the cytochrome b6-f complex, which mediates electron transfer between photosystem II (PSII) and photosystem I (PSI), cyclic electron flow around PSI, and state transitions. This chain is Cytochrome b6, found in Skeletonema costatum (Marine centric diatom).